The sequence spans 238 residues: Lactate utilization protein A (238 aa).

Belongs to the LutA/YkgE family.

Is involved in L-lactate degradation and allows cells to grow with lactate as the sole carbon source. The protein is Lactate utilization protein A of Bacillus licheniformis (strain ATCC 14580 / DSM 13 / JCM 2505 / CCUG 7422 / NBRC 12200 / NCIMB 9375 / NCTC 10341 / NRRL NRS-1264 / Gibson 46).